A 297-amino-acid chain; its full sequence is Averufin oxidase stcO (297 aa).

The helical transmembrane segment at 277–297 (VVVLGVCILLLLGGLLYSIKA) threads the bilayer.

This sequence belongs to the avfA family.

The protein resides in the membrane. The protein operates within mycotoxin biosynthesis; sterigmatocystin biosynthesis. In terms of biological role, averufin oxidase; part of the gene cluster that mediates the biosynthesis of sterigmatocystin (ST), a polyketide-derived furanocoumarin which is part of the most toxic and carcinogenic compounds among the known mycotoxins. The first step in the biosynthesis of sterigmatocystin is the production of hexanoate by the fatty acid synthase (FAS) units stcJ and stcK. The polyketide backbone is assembled by the non-reducing polyketide synthase stcA by condensation of the starter hexanoyl-CoA and 7 malonyl-CoA extender units followed by cyclization and release of norsolorinic acid. Norsolorinic acid is the first stable intermediate in the biosynthesis of sterigmatocystin and is converted into averantin (AVN) by the ketoreductase stcE which reduces the hexanoate ketone to an alcohol. Averantin is then oxidized into 5'-hydroxyaverantin (HAVN) by the cytochrome P450 monooxygenase stcF. 5'-hydroxyaverantin is further converted to 5'-oxyaverantin (OAVN) by the 5'-hydroxyaverantin dehydrogenase stcG. The next step is the conversion of OAVN into averufin (AVF) which is catalyzed by a yet to be identified enzyme. The cytochrome P450 monooxygenase stcB and the flavin-binding monooxygenase stcW are both required for the conversion of averufin to 1-hydroxyversicolorone. The esterase stcI probably catalyzes the formation of versiconal hemiacetal acetate from 1-hydroxyversicolorone. The oxydoreductase stcN then probably catalyzes the biosynthetic step from versiconal to versicolorin B (VERB). The next step is performed by the versicolorin B desaturase stcL to produce versicolorin A (VERA). The ketoreductase stcU and the cytochrome P450 monooxygenase stcS are involved in the conversion of versicolorin A to demethylsterigmatocystin. The Baeyer-Villiger oxidas stcQ and the reductase stcR might be involved in the biosynthetic step from versicolorin A to demethylsterigmatocystin. The final step in the biosynthesis of sterigmatocystin is the methylation of demethylsterigmatocystin catalyzed by the methyltransferase stcP. The protein is Averufin oxidase stcO of Emericella nidulans (strain FGSC A4 / ATCC 38163 / CBS 112.46 / NRRL 194 / M139) (Aspergillus nidulans).